A 1207-amino-acid chain; its full sequence is Dermatan-sulfate epimerase-like protein (1207 aa).

The first 22 residues, 1-22 (MAFMFTEHLLFLTLMMCSFSTC), serve as a signal peptide directing secretion. 4 N-linked (GlcNAc...) asparagine glycosylation sites follow: Asn-28, Asn-661, Asn-683, and Asn-704. 2 helical membrane passes run 761–781 (FPFG…SLVI) and 798–818 (CVLI…WSTC). Residue Asn-869 is glycosylated (N-linked (GlcNAc...) asparagine).

The protein belongs to the dermatan-sulfate isomerase family.

It is found in the membrane. This chain is Dermatan-sulfate epimerase-like protein (Dsel), found in Mus musculus (Mouse).